The sequence spans 394 residues: Phosphoglycerate kinase (394 aa).

Substrate is bound by residues 21–23 (DFN), Arg37, 60–63 (HLGR), Arg119, and Arg152. Residues Lys202, Glu324, and 350 to 353 (GGDS) contribute to the ATP site.

Belongs to the phosphoglycerate kinase family. In terms of assembly, monomer.

It localises to the cytoplasm. The catalysed reaction is (2R)-3-phosphoglycerate + ATP = (2R)-3-phospho-glyceroyl phosphate + ADP. The protein operates within carbohydrate degradation; glycolysis; pyruvate from D-glyceraldehyde 3-phosphate: step 2/5. In Herpetosiphon aurantiacus (strain ATCC 23779 / DSM 785 / 114-95), this protein is Phosphoglycerate kinase.